We begin with the raw amino-acid sequence, 593 residues long: ESX-1 secretion system protein EccCb1 (593 aa).

FtsK domains follow at residues arginine 66–glutamine 260 and glutamine 350–aspartate 546. ATP is bound by residues glycine 85–serine 92 and glycine 377–threonine 384.

In terms of assembly, part of the ESX-1 / type VII secretion system (T7SS), which is composed of cytosolic and membrane components. The ESX-1 membrane complex is composed of EccB1, EccCa1, EccCb1, EccD1 and EccE1.

It is found in the cytoplasm. Part of the ESX-1 / type VII specialized secretion system (T7SS), which exports several proteins including EsxA and EsxB. Plays a role in DNA conjugation, in both donor and recipient strains. The protein is ESX-1 secretion system protein EccCb1 (eccCb1) of Mycolicibacterium smegmatis (strain MKD8) (Mycobacterium smegmatis).